The following is a 188-amino-acid chain: Peptidyl-tRNA hydrolase (188 aa).

Y15 lines the tRNA pocket. H20 acts as the Proton acceptor in catalysis. Residues Y64, N66, and N112 each contribute to the tRNA site.

It belongs to the PTH family. In terms of assembly, monomer.

The protein resides in the cytoplasm. The enzyme catalyses an N-acyl-L-alpha-aminoacyl-tRNA + H2O = an N-acyl-L-amino acid + a tRNA + H(+). Its function is as follows. Hydrolyzes ribosome-free peptidyl-tRNAs (with 1 or more amino acids incorporated), which drop off the ribosome during protein synthesis, or as a result of ribosome stalling. Functionally, catalyzes the release of premature peptidyl moieties from peptidyl-tRNA molecules trapped in stalled 50S ribosomal subunits, and thus maintains levels of free tRNAs and 50S ribosomes. This Cytophaga hutchinsonii (strain ATCC 33406 / DSM 1761 / CIP 103989 / NBRC 15051 / NCIMB 9469 / D465) protein is Peptidyl-tRNA hydrolase.